We begin with the raw amino-acid sequence, 327 residues long: Beta-1,4-galactosyltransferase 7 (327 aa).

Residues 1-30 (MLPSRRKAAQLPWEDGRARLLPGGLRRKCS) lie on the Cytoplasmic side of the membrane. Residues 31-51 (IFHLFIAFLLLVFFSLLWLQL) traverse the membrane as a helical; Signal-anchor for type II membrane protein segment. Over 52–327 (SCSGDMAQVT…KTATPWCIFG (276 aa)) the chain is Lumenal. The tract at residues 61-88 (TRGQGQETSGPPRACPPEPPPEHWEEDE) is disordered. UDP-alpha-D-galactose is bound by residues 100 to 104 (PFRER) and 139 to 141 (FNR). The N-linked (GlcNAc...) asparagine glycan is linked to Asn-154. Residues 164–165 (VD), Tyr-194, and Trp-224 each bind UDP-alpha-D-galactose. Residue Asp-165 participates in Mn(2+) binding. 226 to 229 (REDD) is a binding site for N-acetyl-D-glucosamine. His-257 provides a ligand contact to Mn(2+). UDP-alpha-D-galactose contacts are provided by residues 257–259 (HLH) and Arg-266.

Belongs to the glycosyltransferase 7 family. It depends on Mn(2+) as a cofactor.

Its subcellular location is the golgi apparatus. It localises to the golgi stack membrane. The enzyme catalyses 3-O-(beta-D-xylosyl)-L-seryl-[protein] + UDP-alpha-D-galactose = 3-O-(beta-D-galactosyl-(1-&gt;4)-beta-D-xylosyl)-L-seryl-[protein] + UDP + H(+). It participates in protein modification; protein glycosylation. Functionally, required for the biosynthesis of the tetrasaccharide linkage region of proteoglycans, especially for small proteoglycans in skin fibroblasts. This chain is Beta-1,4-galactosyltransferase 7 (B4galt7), found in Mus musculus (Mouse).